Reading from the N-terminus, the 201-residue chain is Recombination protein RecR (201 aa).

Residues 57–72 (CKSCRTFTEEDECAIC) form a C4-type zinc finger. A Toprim domain is found at 81-176 (GQLCVVEMPA…KVTRIAHGIP (96 aa)).

Belongs to the RecR family.

In terms of biological role, may play a role in DNA repair. It seems to be involved in an RecBC-independent recombinational process of DNA repair. It may act with RecF and RecO. The protein is Recombination protein RecR of Glaesserella parasuis serovar 5 (strain SH0165) (Haemophilus parasuis).